Here is a 669-residue protein sequence, read N- to C-terminus: UvrABC system protein B (669 aa).

Positions 26–183 (EGLEDGLAHQ…RRLADLQYTR (158 aa)) constitute a Helicase ATP-binding domain. 39–46 (GVTGSGKT) contributes to the ATP binding site. The short motif at 92–115 (YYDYYQPEAYVPSSDTFIEKDASV) is the Beta-hairpin element. A Helicase C-terminal domain is found at 431–593 (QVDDLLSEIR…IVPKGLNKKI (163 aa)). One can recognise a UVR domain in the interval 629 to 664 (EKEIQRLETEMYQHAKDLEFEKAAQTRDKLQTLRAQ).

This sequence belongs to the UvrB family. In terms of assembly, forms a heterotetramer with UvrA during the search for lesions. Interacts with UvrC in an incision complex.

It is found in the cytoplasm. The UvrABC repair system catalyzes the recognition and processing of DNA lesions. A damage recognition complex composed of 2 UvrA and 2 UvrB subunits scans DNA for abnormalities. Upon binding of the UvrA(2)B(2) complex to a putative damaged site, the DNA wraps around one UvrB monomer. DNA wrap is dependent on ATP binding by UvrB and probably causes local melting of the DNA helix, facilitating insertion of UvrB beta-hairpin between the DNA strands. Then UvrB probes one DNA strand for the presence of a lesion. If a lesion is found the UvrA subunits dissociate and the UvrB-DNA preincision complex is formed. This complex is subsequently bound by UvrC and the second UvrB is released. If no lesion is found, the DNA wraps around the other UvrB subunit that will check the other stand for damage. In Proteus mirabilis (strain HI4320), this protein is UvrABC system protein B.